The following is a 158-amino-acid chain: Phosphopantetheine adenylyltransferase (158 aa).

Serine 9 contacts substrate. Residues 9-10 and histidine 17 each bind ATP; that span reads SF. Positions 41, 73, and 87 each coordinate substrate. Residues 88–90, glutamate 98, and 122–128 each bind ATP; these read GLR and YSFVSSS.

This sequence belongs to the bacterial CoaD family. In terms of assembly, homohexamer. Mg(2+) is required as a cofactor.

The protein resides in the cytoplasm. It catalyses the reaction (R)-4'-phosphopantetheine + ATP + H(+) = 3'-dephospho-CoA + diphosphate. It participates in cofactor biosynthesis; coenzyme A biosynthesis; CoA from (R)-pantothenate: step 4/5. In terms of biological role, reversibly transfers an adenylyl group from ATP to 4'-phosphopantetheine, yielding dephospho-CoA (dPCoA) and pyrophosphate. This is Phosphopantetheine adenylyltransferase from Mycolicibacterium smegmatis (strain ATCC 700084 / mc(2)155) (Mycobacterium smegmatis).